Reading from the N-terminus, the 291-residue chain is Insulin-like growth factor-binding protein 3 (291 aa).

The signal sequence occupies residues 1–27 (MLRARPALWAAALTALTLLRGPPAARA). The interval 28–134 (GAGTMGAGPV…LRPYLLPSAS (107 aa)) is IGF-binding. Residues 36 to 119 (PVVRCEPCDA…LDGRGLCANA (84 aa)) enclose the IGFBP N-terminal domain. 6 disulfides stabilise this stretch: C40-C69, C43-C71, C51-C72, C60-C75, C83-C96, and C90-C116. N-linked (GlcNAc...) asparagine glycosylation is found at N118 and N136. Disordered stretches follow at residues 132–162 (SASG…RVPV) and 177–211 (KGHA…TEYG). The segment covering 146–155 (MGSTENQAGP) has biased composition (polar residues). Residue S148 is modified to Phosphoserine. Basic and acidic residues predominate over residues 177-190 (KGHAKDSQRYKVDY). Residues 191–202 (ESQSTDTQNFSS) show a composition bias toward polar residues. The N-linked (GlcNAc...) asparagine glycan is linked to N199. S201 carries the post-translational modification Phosphoserine. The region spanning 210–285 (YGPCRREMED…DVKGKGDVHC (76 aa)) is the Thyroglobulin type-1 domain. 3 disulfide bridges follow: C213-C240, C251-C262, and C264-C285.

Interacts with XLKD1. Binds IGF2 more than IGF1. Forms a ternary complex of about 140 to 150 kDa with IGF1 or IGF2 and a 85 kDa glycoprotein (ALS). Interacts with humanin; humanin competes with importin KPNB1 for binding to IGFBP3, blocking IGFBP3 nuclear import and IGFBP3-mediated apoptosis. Interacts with TMEM219. Interacts with RXRA; this interaction modulates the transcriptional activity of RXRA. Interacts with LRP1; this interaction mediates cell growth inhibition independent of IGF1. Phosphorylated by FAM20C in the extracellular medium. Phosphorylated by CK2; resulting in decreased nuclear localization. Plasma; expressed by most tissues.

Its subcellular location is the secreted. It is found in the nucleus. Functionally, multifunctional protein that plays a critical role in regulating the availability of IGFs such as IGF1 and IGF2 to their receptors and thereby regulates IGF-mediated cellular processes including proliferation, differentiation, and apoptosis in a cell-type specific manner. Also exhibits IGF-independent antiproliferative and apoptotic effects mediated by its receptor TMEM219/IGFBP-3R. Inhibits the positive effect of humanin on insulin sensitivity. Promotes testicular germ cell apoptosis. Acts via LRP-1/alpha2M receptor, also known as TGF-beta type V receptor, to mediate cell growth inhibition independent of IGF1. Mechanistically, induces serine-specific dephosphorylation of IRS1 or IRS2 upon ligation to its receptor, leading to the inhibitory cascade. In the nucleus, interacts with transcription factors such as retinoid X receptor-alpha/RXRA to regulate transcriptional signaling and apoptosis. This chain is Insulin-like growth factor-binding protein 3 (IGFBP3), found in Bos taurus (Bovine).